The chain runs to 554 residues: Hydroxylamine reductase (554 aa).

[2Fe-2S] cluster contacts are provided by C3, C6, C18, and C25. 8 residues coordinate hybrid [4Fe-2O-2S] cluster: H252, E276, C320, C408, C436, C461, E495, and K497. At C408 the chain carries Cysteine persulfide.

This sequence belongs to the HCP family. The cofactor is [2Fe-2S] cluster. It depends on hybrid [4Fe-2O-2S] cluster as a cofactor.

Its subcellular location is the cytoplasm. The catalysed reaction is A + NH4(+) + H2O = hydroxylamine + AH2 + H(+). In terms of biological role, catalyzes the reduction of hydroxylamine to form NH(3) and H(2)O. This is Hydroxylamine reductase from Shewanella putrefaciens (strain CN-32 / ATCC BAA-453).